Reading from the N-terminus, the 172-residue chain is Ribosome maturation factor RimM (172 aa).

Residues 97–170 (DDEYYYDEII…LITIDVLEGL (74 aa)) enclose the PRC barrel domain.

Belongs to the RimM family. In terms of assembly, binds ribosomal protein uS19.

The protein localises to the cytoplasm. Functionally, an accessory protein needed during the final step in the assembly of 30S ribosomal subunit, possibly for assembly of the head region. Essential for efficient processing of 16S rRNA. May be needed both before and after RbfA during the maturation of 16S rRNA. It has affinity for free ribosomal 30S subunits but not for 70S ribosomes. This is Ribosome maturation factor RimM from Leuconostoc citreum (strain KM20).